We begin with the raw amino-acid sequence, 304 residues long: Acetyl-coenzyme A carboxylase carboxyl transferase subunit beta (304 aa).

In terms of domain architecture, CoA carboxyltransferase N-terminal spans 23-292; the sequence is VWTKCDSCGQ…PNPEAPREGV (270 aa). Residues Cys27, Cys30, Cys46, and Cys49 each contribute to the Zn(2+) site. Residues 27–49 form a C4-type zinc finger; it reads CDSCGQVLYRAELERNLEVCPKC. The tract at residues 285–304 is disordered; that stretch reads PEAPREGVVVPPVPDQEPEA. Residues 295–304 show a composition bias toward pro residues; sequence PPVPDQEPEA.

This sequence belongs to the AccD/PCCB family. In terms of assembly, acetyl-CoA carboxylase is a heterohexamer composed of biotin carboxyl carrier protein (AccB), biotin carboxylase (AccC) and two subunits each of ACCase subunit alpha (AccA) and ACCase subunit beta (AccD). Requires Zn(2+) as cofactor.

It localises to the cytoplasm. The catalysed reaction is N(6)-carboxybiotinyl-L-lysyl-[protein] + acetyl-CoA = N(6)-biotinyl-L-lysyl-[protein] + malonyl-CoA. It functions in the pathway lipid metabolism; malonyl-CoA biosynthesis; malonyl-CoA from acetyl-CoA: step 1/1. In terms of biological role, component of the acetyl coenzyme A carboxylase (ACC) complex. Biotin carboxylase (BC) catalyzes the carboxylation of biotin on its carrier protein (BCCP) and then the CO(2) group is transferred by the transcarboxylase to acetyl-CoA to form malonyl-CoA. This chain is Acetyl-coenzyme A carboxylase carboxyl transferase subunit beta, found in Shigella sonnei (strain Ss046).